The sequence spans 467 residues: Sialic acid-binding Ig-like lectin 7 (467 aa).

The N-terminal stretch at 1-18 (MLLLLLLPLLWGRERVEG) is a signal peptide. Residues 19 to 353 (QKSNRKDYSL…KMRPVSGVLL (335 aa)) are Extracellular-facing. The region spanning 39–122 (GMCVHVRCSF…ARMSDAGRYF (84 aa)) is the Ig-like V-type domain. An intrachain disulfide couples cysteine 46 to cysteine 106. Residue asparagine 105 is glycosylated (N-linked (GlcNAc...) asparagine). Residues arginine 124 and 131–135 (KWNYK) contribute to the N-acetylneuraminate site. N-linked (GlcNAc...) asparagine glycans are attached at residues asparagine 142 and asparagine 165. Residues 150 to 233 (PNILIPGTLE…AGVTTNRTIQ (84 aa)) enclose the Ig-like C2-type 1 domain. A disulfide bridge links cysteine 168 with cysteine 217. N-linked (GlcNAc...) asparagine glycans are attached at residues asparagine 229, asparagine 235, asparagine 242, and asparagine 260. Residues 240 to 336 (PQNLTVTVFQ…GSQHVSLNLS (97 aa)) form the Ig-like C2-type 2 domain. Cysteine 276 and cysteine 320 are oxidised to a cystine. Asparagine 334 carries an N-linked (GlcNAc...) asparagine glycan. Residues 354–376 (GAVGGAGATALVFLSFCVIFIVV) traverse the membrane as a helical segment. At 377-467 (RSCRKKSARP…NEYSEIKIPK (91 aa)) the chain is on the cytoplasmic side. The span at 401-412 (IRGSASQGNLTE) shows a compositional bias: polar residues. The tract at residues 401–431 (IRGSASQGNLTESWADDNPRHHGLAAHSSGE) is disordered. Phosphoserine is present on serine 429. The short motif at 435-440 (IQYAPL) is the ITIM motif element. Residues 443 to 467 (HKGEPQDLSGQEATNNEYSEIKIPK) form a disordered region. Positions 450–460 (LSGQEATNNEY) are enriched in polar residues.

It belongs to the immunoglobulin superfamily. SIGLEC (sialic acid binding Ig-like lectin) family. As to quaternary structure, interacts with PTPN6/SHP-1 upon phosphorylation. In terms of processing, tyrosine phosphorylated. In terms of tissue distribution, predominantly expressed by resting and activated natural killer cells and at lower levels by granulocytes and monocytes. High expression found in placenta, liver, lung, spleen, and peripheral blood leukocytes.

The protein localises to the membrane. In terms of biological role, putative adhesion molecule that mediates sialic-acid dependent binding to cells. Preferentially binds to alpha-2,3- and alpha-2,6-linked sialic acid. Also binds disialogangliosides (disialogalactosyl globoside, disialyl lactotetraosylceramide and disialyl GalNAc lactotetraoslylceramide). The sialic acid recognition site may be masked by cis interactions with sialic acids on the same cell surface. In the immune response, may act as an inhibitory receptor upon ligand induced tyrosine phosphorylation by recruiting cytoplasmic phosphatase(s) via their SH2 domain(s) that block signal transduction through dephosphorylation of signaling molecules. Mediates inhibition of natural killer cells cytotoxicity. May play a role in hemopoiesis. Inhibits differentiation of CD34+ cell precursors towards myelomonocytic cell lineage and proliferation of leukemic myeloid cells (in vitro). This is Sialic acid-binding Ig-like lectin 7 (SIGLEC7) from Homo sapiens (Human).